The primary structure comprises 437 residues: Probable exopolygalacturonase C (437 aa).

Positions 1–21 are cleaved as a signal peptide; the sequence is MLITKTAFLAFLLSSVPLAHG. N-linked (GlcNAc...) asparagine glycosylation is found at N25, N42, N82, N99, and N149. PbH1 repeat units follow at residues 215–236 and 238–259; these read GTNI…AVGS and SHNI…SIGS. The active-site Proton donor is D229. Residue H253 is part of the active site. N269 carries N-linked (GlcNAc...) asparagine glycosylation. PbH1 repeat units lie at residues 270–291 and 299–320; these read ITNL…RFKS and VKNV…FVTQ. Residues N301 and N311 are each glycosylated (N-linked (GlcNAc...) asparagine). C386 and C392 are oxidised to a cystine. N-linked (GlcNAc...) asparagine glycosylation is found at N428 and N431.

Belongs to the glycosyl hydrolase 28 family.

It localises to the secreted. It carries out the reaction [(1-&gt;4)-alpha-D-galacturonosyl](n) + H2O = alpha-D-galacturonate + [(1-&gt;4)-alpha-D-galacturonosyl](n-1). Specific in hydrolyzing the terminal glycosidic bond of polygalacturonic acid and oligogalacturonates. This is Probable exopolygalacturonase C (pgxC) from Aspergillus flavus (strain ATCC 200026 / FGSC A1120 / IAM 13836 / NRRL 3357 / JCM 12722 / SRRC 167).